Here is a 401-residue protein sequence, read N- to C-terminus: Nicotinate phosphoribosyltransferase (401 aa).

Histidine 221 bears the Phosphohistidine; by autocatalysis mark.

The protein belongs to the NAPRTase family. Transiently phosphorylated on a His residue during the reaction cycle. Phosphorylation strongly increases the affinity for substrates and increases the rate of nicotinate D-ribonucleotide production. Dephosphorylation regenerates the low-affinity form of the enzyme, leading to product release.

It carries out the reaction nicotinate + 5-phospho-alpha-D-ribose 1-diphosphate + ATP + H2O = nicotinate beta-D-ribonucleotide + ADP + phosphate + diphosphate. It participates in cofactor biosynthesis; NAD(+) biosynthesis; nicotinate D-ribonucleotide from nicotinate: step 1/1. Its function is as follows. Catalyzes the synthesis of beta-nicotinate D-ribonucleotide from nicotinate and 5-phospho-D-ribose 1-phosphate at the expense of ATP. The protein is Nicotinate phosphoribosyltransferase of Pectobacterium atrosepticum (strain SCRI 1043 / ATCC BAA-672) (Erwinia carotovora subsp. atroseptica).